The primary structure comprises 291 residues: Small ribosomal subunit biogenesis GTPase RsgA (291 aa).

A CP-type G domain is found at 63–221 (KNELKRPPVS…IADTPGFSAL (159 aa)). GTP-binding positions include 112 to 115 (TKKD) and 164 to 172 (GQSGVGKST). Positions 245, 250, 252, and 258 each coordinate Zn(2+).

This sequence belongs to the TRAFAC class YlqF/YawG GTPase family. RsgA subfamily. In terms of assembly, monomer. Associates with 30S ribosomal subunit, binds 16S rRNA. It depends on Zn(2+) as a cofactor.

It is found in the cytoplasm. Its function is as follows. One of several proteins that assist in the late maturation steps of the functional core of the 30S ribosomal subunit. Helps release RbfA from mature subunits. May play a role in the assembly of ribosomal proteins into the subunit. Circularly permuted GTPase that catalyzes slow GTP hydrolysis, GTPase activity is stimulated by the 30S ribosomal subunit. In Staphylococcus aureus (strain MRSA252), this protein is Small ribosomal subunit biogenesis GTPase RsgA.